The primary structure comprises 783 residues: Probable galactinol--sucrose galactosyltransferase 5 (783 aa).

A phosphoserine mark is found at Ser-9 and Ser-11.

It belongs to the glycosyl hydrolases 36 family.

It catalyses the reaction alpha-D-galactosyl-(1-&gt;3)-1D-myo-inositol + sucrose = raffinose + myo-inositol. Functionally, transglycosidase operating by a ping-pong reaction mechanism. Involved in the synthesis of raffinose, a major soluble carbohydrate in seeds, roots and tubers. In Arabidopsis thaliana (Mouse-ear cress), this protein is Probable galactinol--sucrose galactosyltransferase 5 (RFS5).